Consider the following 148-residue polypeptide: Large ribosomal subunit protein bL9 (148 aa).

The protein belongs to the bacterial ribosomal protein bL9 family.

Its function is as follows. Binds to the 23S rRNA. The polypeptide is Large ribosomal subunit protein bL9 (Staphylococcus epidermidis (strain ATCC 35984 / DSM 28319 / BCRC 17069 / CCUG 31568 / BM 3577 / RP62A)).